Reading from the N-terminus, the 509-residue chain is MATVQEKIELLHEKLAKVKAGGGEKRVEKQHAQGKMTARERLAKLFDDNSFVELDQFVKHRCVNFGQEKKELPGEGVVTGYGTIDGRLVYAFAQDFTVEGGSLGEMHAAKIVKVQRLAMKMGAPIVGINDSGGARIQEAVDALAGYGKIFFENTNASGVIPQISVIMGPCAGGAVYSPALTDFIYMVKNTSQMFITGPAVIKSVTGEEVTAEDLGGAMAHNSVSGVAHFAAENEDDCIAQIRYLLGFLPSNNMEDAPLVDTGDDPTREDESLNSLLPDNSNMPYDMKDVIAATVDNGEYYEVQPFYATNIITCFARFDGQSVGIIANQPKVMAGCLDINASDKSSRFIRFCDAFNIPIVNFVDVPGFLPGTNQEWGGIIRHGAKMLYAYSEATVPKITVITRKAYGGSYLAMCSQDLGADQVYAWPTSEIAVMGPAGAANIIFKKDEDKDAKTAKYVEEFATPYKAAERGFVDVVIEPKQTRPAVINALAMLASKRENRAPKKHGNIPL.

Positions 4-260 (VQEKIELLHE…NNMEDAPLVD (257 aa)) constitute a CoA carboxyltransferase N-terminal domain. Residues 267 to 503 (REDESLNSLL…SKRENRAPKK (237 aa)) form the CoA carboxyltransferase C-terminal domain.

Belongs to the AccD/PCCB family. In terms of assembly, the methylmalonyl-CoA decarboxylase is composed of five subunits: the carboxyltransferase alpha subunit (MmdA), the tunnel beta subunit (MmdB), the biotin-containing gamma subunit (MmdC), and the delta (MmdD) and epsilon (MmdE) subunits. Interacts with the gamma subunit.

It is found in the cell membrane. It carries out the reaction (S)-methylmalonyl-CoA + Na(+)(in) + H(+)(out) = propanoyl-CoA + Na(+)(out) + CO2. With respect to regulation, completely inhibited by avidin. In terms of biological role, carboxyltransferase subunit of the sodium ion pump methylmalonyl-CoA decarboxylase, which converts the chemical energy of a decarboxylation reaction into an electrochemical gradient of Na(+) ions across the cytoplasmic membrane, thereby creating a sodium ion motive force that is used for ATP synthesis. The alpha subunit catalyzes the Na(+)-independent carboxyltransfer from methylmalonyl-CoA to the prosthetic biotin group located on the gamma subunit. Can also convert malonyl-CoA into acetyl-CoA. The polypeptide is Methylmalonyl-CoA decarboxylase subunit alpha (Veillonella parvula (Staphylococcus parvulus)).